Reading from the N-terminus, the 177-residue chain is Disulfide bond formation protein B (177 aa).

Residues 1–14 (MMVWNWIDRTPRRV) lie on the Cytoplasmic side of the membrane. Residues 15-31 (LALISLACVALLACGLY) traverse the membrane as a helical segment. The Periplasmic segment spans residues 32–49 (LQHVVGLVPCPMCIVQRY). Cysteine 41 and cysteine 44 are joined by a disulfide. A helical transmembrane segment spans residues 50-64 (ALIGLALLTGLASAR). Over 65 to 70 (SAKGWW) the chain is Cytoplasmic. Residues 71–89 (LTLSALAALTAGFGATVAA) form a helical membrane-spanning segment. Topologically, residues 90–145 (RQSWLQWYPPQSVSCGRDFYGMIESFPLSRAIPMILRGSGDCAAVDWSLLGGSIAN) are periplasmic. Cysteine 104 and cysteine 131 are joined by a disulfide. A helical membrane pass occupies residues 146-164 (WSFLCFALLGLLLLALLAR). Topologically, residues 165-177 (GVRGARQRAPAPV) are cytoplasmic.

Belongs to the DsbB family.

The protein resides in the cell inner membrane. Functionally, required for disulfide bond formation in some periplasmic proteins. Acts by oxidizing the DsbA protein. The protein is Disulfide bond formation protein B of Verminephrobacter eiseniae (strain EF01-2).